We begin with the raw amino-acid sequence, 121 residues long: Large ribosomal subunit protein uL14 (121 aa).

It belongs to the universal ribosomal protein uL14 family. Part of the 50S ribosomal subunit. Forms a cluster with proteins L3 and L19. In the 70S ribosome, L14 and L19 interact and together make contacts with the 16S rRNA in bridges B5 and B8.

Its function is as follows. Binds to 23S rRNA. Forms part of two intersubunit bridges in the 70S ribosome. In Prochlorococcus marinus (strain MIT 9301), this protein is Large ribosomal subunit protein uL14.